We begin with the raw amino-acid sequence, 449 residues long: Heterogeneous nuclear ribonucleoprotein H2 (449 aa).

M1 is modified (N-acetylmethionine). The residue at position 2 (M2) is an N-acetylmethionine; in Heterogeneous nuclear ribonucleoprotein H2, N-terminally processed. Residues 11-90 (FVVKVRGLPW…RYVEVFKSNS (80 aa)) enclose the RRM 1 domain. S23 carries the phosphoserine modification. A Glycyl lysine isopeptide (Lys-Gly) (interchain with G-Cter in SUMO2) cross-link involves residue K35. Phosphoserine is present on residues S54 and S63. A Glycyl lysine isopeptide (Lys-Gly) (interchain with G-Cter in SUMO2) cross-link involves residue K87. S90 is subject to Phosphoserine. K98 is covalently cross-linked (Glycyl lysine isopeptide (Lys-Gly) (interchain with G-Cter in SUMO2)). Positions 111 to 188 (GFVRLRGLPF…RYIEIFKSSR (78 aa)) constitute an RRM 2 domain. Dimethylated arginine; alternate is present on R233. R233 bears the Omega-N-methylarginine; alternate mark. The stretch at 234-249 (GAYGGGYGGYDDYGGY) is one 1-1 repeat. The segment at 234 to 433 (GAYGGGYGGY…YGGQSSMSGY (200 aa)) is 2 X 16 AA Gly-rich approximate repeats. A Phosphotyrosine modification is found at Y246. Residues 289-364 (HCVHMRGLPY…RYVELFLNST (76 aa)) form the RRM 3 domain. At S310 the chain carries Phosphoserine. A run of 3 repeats spans residues 354–372 (HRYV…GGAY), 374–392 (HSYV…GGAY), and 418–433 (GGYG…MSGY). The segment at 354 to 392 (HRYVELFLNSTAGTSGGAYDHSYVELFLNSTAGASGGAY) is 2 X 19 AA perfect repeats.

As to quaternary structure, component of a ribonucleoprotein complex containing mRNAs and RNA-binding proteins including DDX5, HNRNPH2 and SRSF1 as well as splicing regulator ARVCF. Interacts with TXNL4/DIM1.

It localises to the nucleus. Its subcellular location is the nucleoplasm. In terms of biological role, this protein is a component of the heterogeneous nuclear ribonucleoprotein (hnRNP) complexes which provide the substrate for the processing events that pre-mRNAs undergo before becoming functional, translatable mRNAs in the cytoplasm. Binds poly(RG). The protein is Heterogeneous nuclear ribonucleoprotein H2 (HNRNPH2) of Bos taurus (Bovine).